The sequence spans 230 residues: Uracil-DNA glycosylase (230 aa).

The active-site Proton acceptor is the Asp-70.

This sequence belongs to the uracil-DNA glycosylase (UDG) superfamily. UNG family.

It is found in the cytoplasm. It catalyses the reaction Hydrolyzes single-stranded DNA or mismatched double-stranded DNA and polynucleotides, releasing free uracil.. In terms of biological role, excises uracil residues from the DNA which can arise as a result of misincorporation of dUMP residues by DNA polymerase or due to deamination of cytosine. The chain is Uracil-DNA glycosylase from Pseudomonas syringae pv. tomato (strain ATCC BAA-871 / DC3000).